Here is a 588-residue protein sequence, read N- to C-terminus: Aspartate--tRNA ligase (588 aa).

Glu174 serves as a coordination point for L-aspartate. The interval 198–201 (QLFK) is aspartate. L-aspartate is bound at residue Arg220. Residues 220-222 (RDE) and Gln229 contribute to the ATP site. His448 lines the L-aspartate pocket. Residue Glu482 participates in ATP binding. Arg489 is a binding site for L-aspartate. 534–537 (GIDR) is an ATP binding site.

Belongs to the class-II aminoacyl-tRNA synthetase family. Type 1 subfamily. As to quaternary structure, homodimer.

Its subcellular location is the cytoplasm. The catalysed reaction is tRNA(Asp) + L-aspartate + ATP = L-aspartyl-tRNA(Asp) + AMP + diphosphate. Catalyzes the attachment of L-aspartate to tRNA(Asp) in a two-step reaction: L-aspartate is first activated by ATP to form Asp-AMP and then transferred to the acceptor end of tRNA(Asp). The chain is Aspartate--tRNA ligase from Xanthomonas oryzae pv. oryzae (strain PXO99A).